The primary structure comprises 131 residues: Fluoride-specific ion channel FluC (131 aa).

Helical transmembrane passes span alanine 10–valine 30, phenylalanine 36–tryptophan 56, leucine 71–valine 91, and valine 99–glycine 119. 2 residues coordinate Na(+): glycine 78 and threonine 81.

Belongs to the fluoride channel Fluc/FEX (TC 1.A.43) family.

It localises to the cell membrane. It carries out the reaction fluoride(in) = fluoride(out). Its activity is regulated as follows. Na(+) is not transported, but it plays an essential structural role and its presence is essential for fluoride channel function. Fluoride-specific ion channel. Important for reducing fluoride concentration in the cell, thus reducing its toxicity. The chain is Fluoride-specific ion channel FluC from Methanopyrus kandleri (strain AV19 / DSM 6324 / JCM 9639 / NBRC 100938).